A 583-amino-acid polypeptide reads, in one-letter code: ATP-dependent lipid A-core flippase (583 aa).

7 helical membrane-spanning segments follow: residues 18–38 (LWPI…TLII), 65–85 (IFMW…MSGF), 105–127 (LLFN…ATLM), 143–163 (GALI…IMMF), 167–187 (WQLS…IKLV), 252–272 (VFEP…LYIA), and 277–297 (VIEM…IALM). The region spanning 30–312 (IIASITLIIN…LTNVSAQFQR (283 aa)) is the ABC transmembrane type-1 domain. In terms of domain architecture, ABC transporter spans 344–580 (IIFDNVTFFY…KGVYSQLYKF (237 aa)). An ATP-binding site is contributed by 378 to 385 (GRSGSGKS).

It belongs to the ABC transporter superfamily. Lipid exporter (TC 3.A.1.106) family. In terms of assembly, homodimer.

It localises to the cell inner membrane. The enzyme catalyses ATP + H2O + lipid A-core oligosaccharideSide 1 = ADP + phosphate + lipid A-core oligosaccharideSide 2.. In terms of biological role, involved in lipopolysaccharide (LPS) biosynthesis. Translocates lipid A-core from the inner to the outer leaflet of the inner membrane. Transmembrane domains (TMD) form a pore in the inner membrane and the ATP-binding domain (NBD) is responsible for energy generation. The chain is ATP-dependent lipid A-core flippase from Blochmanniella floridana.